Reading from the N-terminus, the 471-residue chain is Putative multidrug resistance protein MdtD (471 aa).

At 1 to 11 (MTDLPDSTRWQ) the chain is on the periplasmic side. Residues 12–32 (LWIVAFGFFMQSLDTTIVNTA) traverse the membrane as a helical segment. Over 33 to 48 (LPSMAQSLGESPLHMH) the chain is Cytoplasmic. The chain crosses the membrane as a helical span at residues 49–69 (MVIVSYVLTVAVMLPASGWLA). At 70-76 (DKVGVRN) the chain is on the periplasmic side. Residues 77–97 (IFFTAIVLFTLGSLFCALSGT) traverse the membrane as a helical segment. Topologically, residues 98 to 101 (LNEL) are cytoplasmic. A helical membrane pass occupies residues 102 to 124 (LLARALQGVGGAMMVPVGRLTVM). Residues 125–137 (KIVPREQYMAAMT) are Periplasmic-facing. Residues 138 to 158 (FVTLPGQVGPLLGPALGGLLV) traverse the membrane as a helical segment. Residues 159–164 (EYASWH) are Cytoplasmic-facing. Residues 165–185 (WIFLINIPVGIIGAIATLMLM) form a helical membrane-spanning segment. Topologically, residues 186–196 (PNYTMQTRRFD) are periplasmic. Residues 197–217 (LSGFLLLAVGMAVLTLALDGS) traverse the membrane as a helical segment. Over 218-224 (KGTGLSP) the chain is Cytoplasmic. Residues 225–245 (LAIAGLVAVGVVALVLYLLHA) form a helical membrane-spanning segment. The Periplasmic segment spans residues 246–262 (RNNNRALFSLKLFRTRT). A helical transmembrane segment spans residues 263-283 (FSLGLAGSFAGRIGSGMLPFM). Topologically, residues 284 to 285 (TP) are cytoplasmic. Residues 286-306 (VFLQIGLGFSPFHAGLMMIPM) form a helical membrane-spanning segment. Over 307–341 (VLGSMGMKRIVVQVVNRFGYRRVLVATTLGLSLVT) the chain is Periplasmic. A helical membrane pass occupies residues 342 to 362 (LLFMTTALLGWYYVLPFVLFL). Over 363–395 (QGMVNSTRFSSMNTLTLKDLPDNLASSGNSLLS) the chain is Cytoplasmic. Residues 396-416 (MIMQLSMSIGVTIAGLLLGLF) traverse the membrane as a helical segment. Topologically, residues 417 to 430 (GSQHISVDSGTTQT) are periplasmic. Residues 431–451 (VFMYTWLSMAFIIALPAFIFA) traverse the membrane as a helical segment. At 452-471 (RVPNDTHQNVAISRRKRSAQ) the chain is on the cytoplasmic side.

Belongs to the major facilitator superfamily. TCR/Tet family.

It is found in the cell inner membrane. The protein is Putative multidrug resistance protein MdtD of Shigella flexneri.